Consider the following 351-residue polypeptide: c-di-GMP synthase (351 aa).

The protein belongs to the CD-NTase family. E05 subfamily.

The catalysed reaction is 2 GTP = 3',3'-c-di-GMP + 2 diphosphate. Its function is as follows. Cyclic nucleotide synthase (second messenger synthase) of a CBASS antivirus system. CBASS (cyclic oligonucleotide-based antiphage signaling system) provides immunity against bacteriophage. The CD-NTase protein synthesizes cyclic nucleotides in response to infection; these serve as specific second messenger signals. The signals activate a diverse range of effectors, leading to bacterial cell death and thus abortive phage infection. A type I-D(GG) CBASS system. Cyclic dinucleotide synthase that catalyzes the synthesis of c-di-GMP, has no activity with other NTP substrates. The polypeptide is c-di-GMP synthase (cdnE) (Capnocytophaga granulosa (strain ATCC 51502 / DSM 11449 / JCM 8566 / LMG 16022 / NCTC 12948 / B0611)).